The chain runs to 623 residues: uncharacterized protein (623 aa).

The 144-residue stretch at 28-171 (TSAEVSQRVL…TIATLFAQVQ (144 aa)) folds into the GAF domain. A GGDEF domain is found at 212–345 (GPVAALFLDL…GGDSVAIFTA (134 aa)). The region spanning 354-609 (RNDIELHLRR…AMRHMLSARR (256 aa)) is the EAL domain.

This is an uncharacterized protein from Mycobacterium tuberculosis (strain CDC 1551 / Oshkosh).